A 163-amino-acid chain; its full sequence is NADPH-dependent 7-cyano-7-deazaguanine reductase (163 aa).

A compositionally biased stretch (basic residues) spans 1–10 (MSKPPRRSPR). Residues 1 to 23 (MSKPPRRSPRKPTPASPELQLGH) are disordered. C61 functions as the Thioimide intermediate in the catalytic mechanism. The active-site Proton donor is D68. Substrate is bound by residues 83 to 85 (LES) and 102 to 103 (HE).

Belongs to the GTP cyclohydrolase I family. QueF type 1 subfamily.

The protein resides in the cytoplasm. The catalysed reaction is 7-aminomethyl-7-carbaguanine + 2 NADP(+) = 7-cyano-7-deazaguanine + 2 NADPH + 3 H(+). Its pathway is tRNA modification; tRNA-queuosine biosynthesis. Its function is as follows. Catalyzes the NADPH-dependent reduction of 7-cyano-7-deazaguanine (preQ0) to 7-aminomethyl-7-deazaguanine (preQ1). The sequence is that of NADPH-dependent 7-cyano-7-deazaguanine reductase from Rhodopseudomonas palustris (strain BisA53).